A 779-amino-acid polypeptide reads, in one-letter code: Phosphoribosylformylglycinamidine synthase subunit PurL (779 aa).

The active site involves His52. ATP-binding residues include Tyr55 and Lys94. Glu96 lines the Mg(2+) pocket. Substrate contacts are provided by residues 97-100 and Arg119; that span reads SHNH. Catalysis depends on His98, which acts as the Proton acceptor. Asp120 contributes to the Mg(2+) binding site. Position 243 (Gln243) interacts with substrate. Residue Asp271 coordinates Mg(2+). 315 to 317 is a binding site for substrate; sequence ESQ. Positions 523 and 560 each coordinate ATP. Asn561 is a binding site for Mg(2+). Substrate is bound at residue Ser563.

The protein belongs to the FGAMS family. In terms of assembly, monomer. Part of the FGAM synthase complex composed of 1 PurL, 1 PurQ and 2 PurS subunits.

It is found in the cytoplasm. It catalyses the reaction N(2)-formyl-N(1)-(5-phospho-beta-D-ribosyl)glycinamide + L-glutamine + ATP + H2O = 2-formamido-N(1)-(5-O-phospho-beta-D-ribosyl)acetamidine + L-glutamate + ADP + phosphate + H(+). It functions in the pathway purine metabolism; IMP biosynthesis via de novo pathway; 5-amino-1-(5-phospho-D-ribosyl)imidazole from N(2)-formyl-N(1)-(5-phospho-D-ribosyl)glycinamide: step 1/2. In terms of biological role, part of the phosphoribosylformylglycinamidine synthase complex involved in the purines biosynthetic pathway. Catalyzes the ATP-dependent conversion of formylglycinamide ribonucleotide (FGAR) and glutamine to yield formylglycinamidine ribonucleotide (FGAM) and glutamate. The FGAM synthase complex is composed of three subunits. PurQ produces an ammonia molecule by converting glutamine to glutamate. PurL transfers the ammonia molecule to FGAR to form FGAM in an ATP-dependent manner. PurS interacts with PurQ and PurL and is thought to assist in the transfer of the ammonia molecule from PurQ to PurL. This chain is Phosphoribosylformylglycinamidine synthase subunit PurL, found in Prochlorococcus marinus (strain AS9601).